Reading from the N-terminus, the 47-residue chain is MAKGKRTFQPNNRRRAKVHGFRLRMRTRAGRAIVTARRAKGRRSLTA.

This sequence belongs to the bacterial ribosomal protein bL34 family.

This is Large ribosomal subunit protein bL34 from Mycolicibacterium vanbaalenii (strain DSM 7251 / JCM 13017 / BCRC 16820 / KCTC 9966 / NRRL B-24157 / PYR-1) (Mycobacterium vanbaalenii).